A 265-amino-acid polypeptide reads, in one-letter code: ETS-related transcription factor Elf-5 (265 aa).

Positions 43 to 129 (YPAFEHQTAC…FILQNIRTQG (87 aa)) constitute a PNT domain. The segment at residues 173-254 (SHLWEFVRDL…VDRRLVYKFG (82 aa)) is a DNA-binding region (ETS).

This sequence belongs to the ETS family. As to expression, expressed exclusively in tissues with a high content of epithelial cells. Highly expressed in salivary gland, mammary gland, kidney and prostate. Weakly expressed in placenta and lung. Isoform 1 and isoform 2 are differentially expressed in different tissues. In the kidney, only isoform 1 was expressed, while prostate expressed both isoforms, with levels of isoform 2 being higher. Expression is up-regulated during keratinocyte differentiation. Several epithelial carcinoma cell lines showed lack of expression.

Its subcellular location is the nucleus. Functionally, transcriptionally activator that may play a role in regulating the later stages of keratinocytes terminal differentiation. Isoform 2 binds to DNA sequences containing the consensus nucleotide core sequence GGA[AT]. Transcriptionally activates SPRR2A and the parotid gland-specific PSP promoters. In Homo sapiens (Human), this protein is ETS-related transcription factor Elf-5 (ELF5).